Reading from the N-terminus, the 414-residue chain is MAKAKNEVPAVANPDDKLKALEAARLQIEKQFGQGSLMKLGNNSAIGNIEIIPSGSILLDEALGIGGYPRGRIIEIFGPESSGKTTIALHAVAEAQKQGGIAAFIDAEHALDPQYAKALGVNIDELWVSQPDTGEQALEIAESLVRSGAVDVIVIDSVAALTPQAEIAGEMGDSHMGLQARLMSQALRKLTAIIGKSNCMIIFINQIRMKIGVMFGSPETTTGGNALKFYASVRLDVRKIETLGKDDDEAWGNKIRVKVVKNKVAPPFRKVEMEILFGKGVCPYGSLLDSAVKQEIIGKSGSWYSYGDDKIGQGRPNAVKFLEENIDIAQKIEKELREKLFPGRPFVSSFVEKTKEQKEAQEKAVEALKKEEGSKEDALTGNKDETDDSAQKNSAASKAKRAEVVGLPADDSLF.

G78–T85 provides a ligand contact to ATP. Residues Q361 to D384 are compositionally biased toward basic and acidic residues. The disordered stretch occupies residues Q361–F414.

It belongs to the RecA family.

Its subcellular location is the cytoplasm. Can catalyze the hydrolysis of ATP in the presence of single-stranded DNA, the ATP-dependent uptake of single-stranded DNA by duplex DNA, and the ATP-dependent hybridization of homologous single-stranded DNAs. It interacts with LexA causing its activation and leading to its autocatalytic cleavage. This chain is Protein RecA, found in Treponema denticola (strain ATCC 35405 / DSM 14222 / CIP 103919 / JCM 8153 / KCTC 15104).